Consider the following 274-residue polypeptide: Centromere protein K (274 aa).

The disordered stretch occupies residues 1–21 (MSGYQHELPPNISKTSPAPEE). Residues 96-159 (KEELEKIAQE…NQLTAFSEKR (64 aa)) are a coiled coil.

Belongs to the CENP-K/MCM22 family.

It localises to the nucleus. It is found in the chromosome. The protein resides in the centromere. Its subcellular location is the kinetochore. Functionally, probable component of a centromeric complex involved in assembly of kinetochore proteins, mitotic progression and chromosome segregation. The protein is Centromere protein K (cenpk) of Xenopus laevis (African clawed frog).